The chain runs to 500 residues: L-arabinose isomerase (500 aa).

Residues Glu-306, Glu-333, His-350, and His-450 each coordinate Mn(2+).

This sequence belongs to the arabinose isomerase family. As to quaternary structure, homohexamer. It depends on Mn(2+) as a cofactor.

It catalyses the reaction beta-L-arabinopyranose = L-ribulose. It participates in carbohydrate degradation; L-arabinose degradation via L-ribulose; D-xylulose 5-phosphate from L-arabinose (bacterial route): step 1/3. Catalyzes the conversion of L-arabinose to L-ribulose. The sequence is that of L-arabinose isomerase from Yersinia pestis bv. Antiqua (strain Nepal516).